The following is a 229-amino-acid chain: MKTNGKKFRAASEQRVLGKSYEAKQAIALVKQMAFAKFDETVEIAIRLGVDPRHADQVVRGTVVLPAGTGKTMRVLVIATGAKVQEAQEAGADFVGTEFLQKIKDGWLDFDVMIATPDQMGQIGQLGRVLGPRGLMPNPKAGTVTFDVSKAVRESKGGKIEFRVDKGGNVHAPIGKVSFAPDQLETNFSALMDTIVRAKPAAAKGLYIRNVAISSSMGPGVTIDTTPFR.

The protein belongs to the universal ribosomal protein uL1 family. As to quaternary structure, part of the 50S ribosomal subunit.

In terms of biological role, binds directly to 23S rRNA. The L1 stalk is quite mobile in the ribosome, and is involved in E site tRNA release. Protein L1 is also a translational repressor protein, it controls the translation of the L11 operon by binding to its mRNA. The sequence is that of Large ribosomal subunit protein uL1 from Gemmatimonas aurantiaca (strain DSM 14586 / JCM 11422 / NBRC 100505 / T-27).